We begin with the raw amino-acid sequence, 492 residues long: N-succinylglutamate 5-semialdehyde dehydrogenase (492 aa).

220 to 225 (GSASTG) lines the NAD(+) pocket. Active-site residues include Glu243 and Cys277.

It belongs to the aldehyde dehydrogenase family. AstD subfamily.

The enzyme catalyses N-succinyl-L-glutamate 5-semialdehyde + NAD(+) + H2O = N-succinyl-L-glutamate + NADH + 2 H(+). Its pathway is amino-acid degradation; L-arginine degradation via AST pathway; L-glutamate and succinate from L-arginine: step 4/5. Functionally, catalyzes the NAD-dependent reduction of succinylglutamate semialdehyde into succinylglutamate. This is N-succinylglutamate 5-semialdehyde dehydrogenase from Salmonella typhi.